The primary structure comprises 365 residues: MLIFPLINDTSRKIIHIDMDAFFAAVEERDNPALKGKPVVIGKDPRETGGRGVVSTCNYEARKYGIHSAMSSKEAYERCPKAIFISGNYEKYRTVGDQIRRIFKRYTDVVEPMSIDEAYLDVTDNKLGIKSAVKIAKLIQHDIWKEVGLTCSAGVSYNKFLAKLASDFEKPHGLTLVLKEDALCFLAKLPIEKFHGVGKKSVEKLHDMGIYTGQDLLAVPEMTLIDHFGRFGFDLYRKARGISNSPVKSDRIRKSIGSERTYAKLLYQETDIKAEISKNAKRVVALLQDHKKLGKTIVLKVRYADFITLTKRVTLPELTRDAAQIEQVAESIFDTLPEHTVGIRLLGVTMTNLEDKMADIALDLS.

The UmuC domain occupies 14–198 (IIHIDMDAFF…LPIEKFHGVG (185 aa)). Aspartate 18 and aspartate 116 together coordinate Mg(2+). Residue glutamate 117 is part of the active site.

It belongs to the DNA polymerase type-Y family. As to quaternary structure, monomer. The cofactor is Mg(2+).

It localises to the cytoplasm. It catalyses the reaction DNA(n) + a 2'-deoxyribonucleoside 5'-triphosphate = DNA(n+1) + diphosphate. In terms of biological role, poorly processive, error-prone DNA polymerase involved in untargeted mutagenesis. Copies undamaged DNA at stalled replication forks, which arise in vivo from mismatched or misaligned primer ends. These misaligned primers can be extended by PolIV. Exhibits no 3'-5' exonuclease (proofreading) activity. May be involved in translesional synthesis, in conjunction with the beta clamp from PolIII. This Streptococcus pyogenes serotype M3 (strain ATCC BAA-595 / MGAS315) protein is DNA polymerase IV.